The following is a 1038-amino-acid chain: Protein transport protein SEC24 A (1038 aa).

The segment at 1 to 247 is disordered; that stretch reads MGTENQGYPN…PPHTGGFAQR (247 aa). A compositionally biased stretch (pro residues) spans 22-33; that stretch reads SAPPPGIPPQSG. 4 residues coordinate Zn(2+): cysteine 371, cysteine 374, cysteine 393, and cysteine 396. The segment at 371–396 is zinc finger-like; the sequence is CRRCRTYVNPFVTFTDSGRKWRCNIC.

It belongs to the SEC23/SEC24 family. SEC24 subfamily. Component of the coat protein complex II (COPII), composed of at least five proteins: the Sec23/24 complex, the Sec13/31 complex and Sar1. Interacts with SEC221, SEC23E/SEC23A, SEC23B, SEC23G/SEC23C and SEC23F/SEC23D. In terms of assembly, (Microbial infection) Interacts with turnip mosaic virus (TuMV) 6K2 in COPII-coated vesicles. As to expression, mainly expressed in pollen, leaves, inflorescences, roots and stems, and, to a lower extent, in cotyledons, petioles and hypocotyls.

It is found in the cytoplasmic vesicle. The protein resides in the COPII-coated vesicle membrane. It localises to the endoplasmic reticulum membrane. The protein localises to the golgi apparatus membrane. Its subcellular location is the cytoplasm. It is found in the cytosol. Functionally, essential protein. Component of the coat protein complex II (COPII), that covers ER-derived vesicles involved in transport from the endoplasmic reticulum to the Golgi apparatus. COPII is composed of at least five proteins: the SEC23/24 complex, the SEC13/31 complex, and the protein SAR1. Acts in the cytoplasm to promote the transport of secretory, plasma membrane, and vacuolar proteins from the endoplasmic reticulum to the Golgi complex. Involved in maintaining the dynamic identity of organelles of the early secretory pathway. Regulates cell size patterning, and prevents CDKA;1-, DEK1- and ACR4-dependent endoreduplication and giant cells formation in sepals. Required for male gametophytes (pollen grains) development and transmission. In terms of biological role, (Microbial infection) Contributes to viral systemic infection of turnip mosaic virus (TuMV) by triggering the formation of host endoplasmic reticulum (ER)-derived viral vesicles that carry the viral RNA (vRNA) to plasmodesmata for cell-to-cell viral movement. The polypeptide is Protein transport protein SEC24 A (Arabidopsis thaliana (Mouse-ear cress)).